The following is a 206-amino-acid chain: Hypoxanthine-guanine phosphoribosyltransferase (206 aa).

GMP is bound by residues 110 to 118 (DEVDDTRTT), Lys-154, and 181 to 187 (WIMYPWE). The active-site Proton acceptor is Asp-114.

It belongs to the purine/pyrimidine phosphoribosyltransferase family. In terms of assembly, dimer. The cofactor is Mg(2+).

It is found in the endoplasmic reticulum. The catalysed reaction is IMP + diphosphate = hypoxanthine + 5-phospho-alpha-D-ribose 1-diphosphate. The enzyme catalyses GMP + diphosphate = guanine + 5-phospho-alpha-D-ribose 1-diphosphate. In terms of biological role, converts guanine to guanosine monophosphate, and hypoxanthine to inosine monophosphate. Transfers the 5-phosphoribosyl group from 5-phosphoribosylpyrophosphate onto the purine. Plays a central role in the generation of purine nucleotides through the purine salvage pathway. This chain is Hypoxanthine-guanine phosphoribosyltransferase (hpt1), found in Schizosaccharomyces pombe (strain 972 / ATCC 24843) (Fission yeast).